A 569-amino-acid polypeptide reads, in one-letter code: Proline--tRNA ligase (569 aa).

It belongs to the class-II aminoacyl-tRNA synthetase family. ProS type 1 subfamily. Homodimer.

It is found in the cytoplasm. It catalyses the reaction tRNA(Pro) + L-proline + ATP = L-prolyl-tRNA(Pro) + AMP + diphosphate. Its function is as follows. Catalyzes the attachment of proline to tRNA(Pro) in a two-step reaction: proline is first activated by ATP to form Pro-AMP and then transferred to the acceptor end of tRNA(Pro). As ProRS can inadvertently accommodate and process non-cognate amino acids such as alanine and cysteine, to avoid such errors it has two additional distinct editing activities against alanine. One activity is designated as 'pretransfer' editing and involves the tRNA(Pro)-independent hydrolysis of activated Ala-AMP. The other activity is designated 'posttransfer' editing and involves deacylation of mischarged Ala-tRNA(Pro). The misacylated Cys-tRNA(Pro) is not edited by ProRS. The protein is Proline--tRNA ligase of Campylobacter jejuni (strain RM1221).